The chain runs to 266 residues: Beta-lactamase OXA-10 (266 aa).

Positions 1–19 (MKTFAAYVIIACLSSTALA) are cleaved as a signal peptide. Cys44 and Cys51 are joined by a disulfide. Catalysis depends on Ser67, which acts as the Acyl-ester intermediate. Lys70 carries the N6-carboxylysine modification. 4 residues coordinate a beta-lactam: Ser115, Thr206, Phe208, and Arg250.

The protein belongs to the class-D beta-lactamase family. As to quaternary structure, dimer.

Its subcellular location is the periplasm. It catalyses the reaction a beta-lactam + H2O = a substituted beta-amino acid. With respect to regulation, activated, with respect to most beta-lactam substrates, in the presence of 0.05 M sodium bicarbonate. In terms of biological role, class D beta-lactamase which confers resistance to the beta-lactam antibiotics, including penicillin, carbenicillin and oxacillin, and also some cephalosporins. Confers weak resistance to some carbapenems, in E.coli strain C600Z1. Acts via hydrolysis of the beta-lactam ring. Has penicillin- and cephalosporin-hydrolyzing activities. In Pseudomonas aeruginosa, this protein is Beta-lactamase OXA-10.